We begin with the raw amino-acid sequence, 117 residues long: Large ribosomal subunit protein bL20c (117 aa).

It belongs to the bacterial ribosomal protein bL20 family.

It is found in the plastid. The protein resides in the chloroplast. Its function is as follows. Binds directly to 23S ribosomal RNA and is necessary for the in vitro assembly process of the 50S ribosomal subunit. It is not involved in the protein synthesizing functions of that subunit. The chain is Large ribosomal subunit protein bL20c from Gossypium hirsutum (Upland cotton).